The sequence spans 435 residues: Cytochrome c biogenesis protein CcsB (435 aa).

The next 3 helical transmembrane spans lie at 14–34 (LRLA…GTIL), 72–92 (SVWF…CSWR), and 162–182 (VGPL…AWGA).

Belongs to the Ccs1/CcsB family. In terms of assembly, may interact with CcsA.

It is found in the cellular thylakoid membrane. In terms of biological role, required during biogenesis of c-type cytochromes (cytochrome c6 and cytochrome f) at the step of heme attachment. This Synechococcus sp. (strain CC9311) protein is Cytochrome c biogenesis protein CcsB.